Here is a 360-residue protein sequence, read N- to C-terminus: MTTTLQRRESANLWERFCNWVTSTDNRLYVGWFGVIMIPTLLAATICFVIAFIAAPPVDIDGIREPVSGSLLYGNNIITGAVVPSSNAIGLHFYPIWEAASLDEWLYNGGPYQLIIFHFLLGASCYMGRQWELSYRLGMRPWICVAYSAPLASAFAVFLIYPIGQGSFSDGMPLGISGTFNFMIVFQAEHNILMHPFHQLGVAGVFGGALFCAMHGSLVTSSLIRETTETESANYGYKFGQEEETYNIVAAHGYFGRLIFQYASFNNSRSLHFFLAAWPVVGVWFTALGISTMAFNLNGFNFNHSVIDAKGNVINTWADIINRANLGMEVMHERNAHNFPLDLASAESAPVAMIAPSING.

The Cytoplasmic portion of the chain corresponds to 2–31; the sequence is TTTLQRRESANLWERFCNWVTSTDNRLYVG. The helical transmembrane segment at 32-53 threads the bilayer; that stretch reads WFGVIMIPTLLAATICFVIAFI. Residues 54-110 are Lumenal-facing; it reads AAPPVDIDGIREPVSGSLLYGNNIITGAVVPSSNAIGLHFYPIWEAASLDEWLYNGG. The chain crosses the membrane as a helical span at residues 111-132; it reads PYQLIIFHFLLGASCYMGRQWE. Histidine 118 is a chlorophyll a binding site. Pheophytin a contacts are provided by tyrosine 126 and glutamine 130. Residues 133-142 lie on the Cytoplasmic side of the membrane; sequence LSYRLGMRPW. A helical membrane pass occupies residues 143–163; that stretch reads ICVAYSAPLASAFAVFLIYPI. Pheophytin a is bound at residue tyrosine 147. At 164 to 191 the chain is on the lumenal side; it reads GQGSFSDGMPLGISGTFNFMIVFQAEHN. [CaMn4O5] cluster contacts are provided by aspartate 170 and glutamate 189. The helical transmembrane segment at 192–217 threads the bilayer; the sequence is ILMHPFHQLGVAGVFGGALFCAMHGS. Residue histidine 198 participates in chlorophyll a binding. A quinone contacts are provided by residues histidine 215 and 264–265; that span reads SF. Histidine 215 contacts Fe cation. Residues 218–272 are Cytoplasmic-facing; sequence LVTSSLIRETTETESANYGYKFGQEEETYNIVAAHGYFGRLIFQYASFNNSRSLH. Residue histidine 272 coordinates Fe cation. The helical transmembrane segment at 273–295 threads the bilayer; sequence FFLAAWPVVGVWFTALGISTMAF. The Lumenal segment spans residues 296–344; that stretch reads NLNGFNFNHSVIDAKGNVINTWADIINRANLGMEVMHERNAHNFPLDLA. [CaMn4O5] cluster contacts are provided by histidine 332, glutamate 333, aspartate 342, and alanine 344. The propeptide occupies 345–360; the sequence is SAESAPVAMIAPSING.

Belongs to the reaction center PufL/M/PsbA/D family. PSII is composed of 1 copy each of membrane proteins PsbA, PsbB, PsbC, PsbD, PsbE, PsbF, PsbH, PsbI, PsbJ, PsbK, PsbL, PsbM, PsbT, PsbX, PsbY, PsbZ, Psb30/Ycf12, peripheral proteins PsbO, CyanoQ (PsbQ), PsbU, PsbV and a large number of cofactors. It forms dimeric complexes. Precursor protein interacts with Ycf48. Part of a photosystem II (PSII) assembly intermediate complex PSII-I; crystallized from a strain deleted of psbJ, it forms monomeric PSII before addition of the oxygen evolving complex. PSII-I includes 3 assembly factors not found in mature PSII (Psb27, Psb28 and Psb34). In PSII-I the C-terminus of D1 (this subunit) is already processed but not yet found at its final position. It depends on The D1/D2 heterodimer binds P680, chlorophylls that are the primary electron donor of PSII, and subsequent electron acceptors. It shares a non-heme iron and each subunit binds pheophytin, quinone, additional chlorophylls, carotenoids and lipids. D1 provides most of the ligands for the Mn4-Ca-O5 cluster of the oxygen-evolving complex (OEC). There is also a Cl(-1) ion associated with D1 and D2, which is required for oxygen evolution. PSII binds additional chlorophylls, carotenoids and specific lipids. as a cofactor. In terms of processing, C-terminally processed by CtpA; processing is essential to allow assembly of the oxygen-evolving complex and thus photosynthetic growth. Post-translationally, tyr-161 forms a radical intermediate that is referred to as redox-active TyrZ, YZ or Y-Z.

The protein localises to the cellular thylakoid membrane. It catalyses the reaction 2 a plastoquinone + 4 hnu + 2 H2O = 2 a plastoquinol + O2. Functionally, photosystem II (PSII) is a light-driven water:plastoquinone oxidoreductase that uses light energy to abstract electrons from H(2)O, generating O(2) and a proton gradient subsequently used for ATP formation. It consists of a core antenna complex that captures photons, and an electron transfer chain that converts photonic excitation into a charge separation. The D1/D2 (PsbA/PsbD) reaction center heterodimer binds P680, the primary electron donor of PSII as well as several subsequent electron acceptors. In Thermosynechococcus vestitus (strain NIES-2133 / IAM M-273 / BP-1), this protein is Photosystem II protein D1 1.